The following is a 368-amino-acid chain: Nicotinamide/nicotinic acid mononucleotide adenylyltransferase (368 aa).

Polar residues predominate over residues 1–14; sequence MHTMNGDNFANSFP. The interval 1–25 is disordered; the sequence is MHTMNGDNFANSFPKNPLLSRNSSS. Ser-36 carries the phosphoserine modification. Positions 47 to 78 are disordered; that stretch reads AKEHEERIRRPSVNRAWQKNSTSGGPSVSLEK. Polar residues predominate over residues 61–72; it reads RAWQKNSTSGGP. A phosphoserine mark is found at Ser-75 and Ser-85. Residues Ser-135 and Phe-136 each contribute to the NAD(+) site. His-143 serves as a coordination point for ATP. Positions 215, 250, 252, 263, 282, and 313 each coordinate NAD(+). Residue 318–321 participates in ATP binding; it reads TKVR.

The protein belongs to the eukaryotic NMN adenylyltransferase family. A divalent metal cation is required as a cofactor.

It localises to the cytoplasm. Its subcellular location is the nucleus. The catalysed reaction is beta-nicotinamide D-ribonucleotide + ATP + H(+) = diphosphate + NAD(+). It carries out the reaction nicotinate beta-D-ribonucleotide + ATP + H(+) = deamido-NAD(+) + diphosphate. Its pathway is cofactor biosynthesis; NAD(+) biosynthesis; deamido-NAD(+) from nicotinate D-ribonucleotide: step 1/1. The protein operates within cofactor biosynthesis; NAD(+) biosynthesis; NAD(+) from nicotinamide D-ribonucleotide: step 1/1. Catalyzes the formation of NAD(+) from nicotinamide mononucleotide (NMN) and ATP. Can also use the deamidated form; nicotinic acid mononucleotide (NaMN) as substrate to form deamido-NAD(+) (NaAD). Key enzyme in both de novo and salvage pathways for NAD(+) biosynthesis. This Schizosaccharomyces pombe (strain 972 / ATCC 24843) (Fission yeast) protein is Nicotinamide/nicotinic acid mononucleotide adenylyltransferase.